A 699-amino-acid chain; its full sequence is Polyribonucleotide nucleotidyltransferase (699 aa).

The Mg(2+) site is built by aspartate 493 and aspartate 499. The KH domain occupies 560-620; that stretch reads PLIANIEIDP…NKVNQAIEYI (61 aa). The S1 motif domain maps to 630–697; it reads GDMFEGKITR…DSGRIQLGKA (68 aa).

This sequence belongs to the polyribonucleotide nucleotidyltransferase family. Requires Mg(2+) as cofactor.

Its subcellular location is the cytoplasm. It catalyses the reaction RNA(n+1) + phosphate = RNA(n) + a ribonucleoside 5'-diphosphate. In terms of biological role, involved in mRNA degradation. Catalyzes the phosphorolysis of single-stranded polyribonucleotides processively in the 3'- to 5'-direction. The protein is Polyribonucleotide nucleotidyltransferase of Thermosipho melanesiensis (strain DSM 12029 / CIP 104789 / BI429).